We begin with the raw amino-acid sequence, 465 residues long: ATP synthase subunit beta (465 aa).

Residue 151-158 (GGAGVGKT) participates in ATP binding.

This sequence belongs to the ATPase alpha/beta chains family. In terms of assembly, F-type ATPases have 2 components, CF(1) - the catalytic core - and CF(0) - the membrane proton channel. CF(1) has five subunits: alpha(3), beta(3), gamma(1), delta(1), epsilon(1). CF(0) has four main subunits: a(1), b(1), b'(1) and c(9-12).

It localises to the cell inner membrane. It catalyses the reaction ATP + H2O + 4 H(+)(in) = ADP + phosphate + 5 H(+)(out). Its function is as follows. Produces ATP from ADP in the presence of a proton gradient across the membrane. The catalytic sites are hosted primarily by the beta subunits. The chain is ATP synthase subunit beta from Chloroherpeton thalassium (strain ATCC 35110 / GB-78).